We begin with the raw amino-acid sequence, 231 residues long: Large ribosomal subunit protein uL1 (231 aa).

It belongs to the universal ribosomal protein uL1 family. In terms of assembly, part of the 50S ribosomal subunit.

Functionally, binds directly to 23S rRNA. The L1 stalk is quite mobile in the ribosome, and is involved in E site tRNA release. In terms of biological role, protein L1 is also a translational repressor protein, it controls the translation of the L11 operon by binding to its mRNA. This Mycoplasmopsis synoviae (strain 53) (Mycoplasma synoviae) protein is Large ribosomal subunit protein uL1.